The chain runs to 183 residues: Protein jagunal homolog 1 (183 aa).

Residues 1-39 lie on the Cytoplasmic side of the membrane; it reads MASRAGPRAAGTDGSDFQHRERVAMHYQMSVTLKYEIKK. Ser3 carries the phosphoserine modification. The helical transmembrane segment at 40 to 60 threads the bilayer; it reads LIYVHLVIWLLLVAKMSVGHL. The Lumenal portion of the chain corresponds to 61-71; it reads RLLSHDQVAMP. The chain crosses the membrane as a helical span at residues 72–92; it reads YQWEYPYLLSVVPSLLGLLSF. Over 93 to 96 the chain is Cytoplasmic; sequence PRNN. A helical membrane pass occupies residues 97–117; it reads ISYLVLSMISMGLFSIAPLIY. Topologically, residues 118–137 are lumenal; it reads GSMEMFPAAQQLYRHGKAYR. Residues 138–158 traverse the membrane as a helical segment; it reads FLFGFSAVSVMYLVLVLAVQV. The Cytoplasmic portion of the chain corresponds to 159-183; sequence HAWQLYYSKKLLDSWFTSTQEKKRK.

It belongs to the jagunal family. Interacts with COPA, COPB2 and COPG2.

It is found in the endoplasmic reticulum membrane. In terms of biological role, endoplasmic reticulum transmembrane protein involved in vesicle-mediated transport, which is required for neutrophil function. Required for vesicle-mediated transport; it is however unclear whether it is involved in early secretory pathway or intracellular protein transport. Acts as a regulator of neutrophil function, probably via its role in vesicle-mediated transport: required for defense against fungal pathogens and for granulocyte colony-stimulating factor (GM-CSF) signaling pathway; possibly by regulating glycosylation and/or targeting of proteins contributing to the viability and migration of neutrophils. This is Protein jagunal homolog 1 (JAGN1) from Bos taurus (Bovine).